We begin with the raw amino-acid sequence, 886 residues long: MESAEIARRWLAFFEKRDHVVVPSTPLVADDPELLFVVAGMQPFKPYFRGDAPAPWPRATSVQKVLRTPDIDEVGKTTRHATFFHMCGNFSFGDYFKETAIPLAWELLTTPVADGGYGFAPDRLWVTVYTDDDEAADIWHRVVGLPVDRIQRRGMADNFWSMGVPGPCGPCSEIYYDRGPEFGVGGGPVANEERYLEVWNLVFMQYERGPGGAKDNYPILGELPAKNIDTGMGLERMAAILQGVDNIYEIDTTRPILDKAAELTGQRYGSGGQNDVRLRMVADHIRAITMLVNDGVVPSNEERGYVLRRLMRRVVRAMRLLGAREPTMHELVATAIAVFTPQYPELSRNAERIFAVADGEEASFFSTLAAGTARFEAAVREAGGGVLSGEQAFVLHDTYGFPIDLTLEMAAEQGVTVDEEGFRALMAEQRRRAKEDAERRKTGAADRAAYRAAAELLGRPVEFTGYTERSGEAVVRGLLVDGAAVPAAHAGQRVEVVLDRTPFYAEGGGQLPDHGVLEFAAGRIDVDDVQQPLPGLIVHRGRVADGEITVGETVLARIDVDRRWAISRSHTATHMVHKAFREFLGDTAAQAGSENAPGRFRFDFTNPSAVPPSVLGEVEERVNDLLLHDLEVTAQIMRQQEAIASGAIAMFGEKYGDQVRVISIGDWSRELCGGTHVPHTGHLGVIKIVSESSIGAGVRRIEALVGLDAYRYLAREAVLVSQLAEQLKAPADELPDRIAGMLARLRDAEKELEKLRQARLLAEAPRLAAARVDVGGLAVVAARVDGDGVDADGLRLLATDLRQRLGGSAVVVLAGVAGGRPVVVAAVGSEALARGVKAGELVGVAAKRLGGGGGGRPDFAQGGGTNPAAVDDAVSAALDAVRAQVG.

His-570, His-574, Cys-672, and His-676 together coordinate Zn(2+).

The protein belongs to the class-II aminoacyl-tRNA synthetase family. Zn(2+) is required as a cofactor.

The protein localises to the cytoplasm. The enzyme catalyses tRNA(Ala) + L-alanine + ATP = L-alanyl-tRNA(Ala) + AMP + diphosphate. Functionally, catalyzes the attachment of alanine to tRNA(Ala) in a two-step reaction: alanine is first activated by ATP to form Ala-AMP and then transferred to the acceptor end of tRNA(Ala). Also edits incorrectly charged Ser-tRNA(Ala) and Gly-tRNA(Ala) via its editing domain. The polypeptide is Alanine--tRNA ligase (Acidothermus cellulolyticus (strain ATCC 43068 / DSM 8971 / 11B)).